The sequence spans 252 residues: Flap endonuclease Xni (252 aa).

Asp105 lines the Mg(2+) pocket. In terms of domain architecture, 5'-3' exonuclease spans 162-251 (EQYQFLDFIA…EINLKQFRVK (90 aa)). The K(+) site is built by Leu172, Ala173, Pro181, Ile183, and Ile186. The tract at residues 185-190 (GIGPKS) is interaction with DNA.

Belongs to the Xni family. It depends on Mg(2+) as a cofactor. Requires K(+) as cofactor.

In terms of biological role, has flap endonuclease activity. During DNA replication, flap endonucleases cleave the 5'-overhanging flap structure that is generated by displacement synthesis when DNA polymerase encounters the 5'-end of a downstream Okazaki fragment. This is Flap endonuclease Xni from Shewanella denitrificans (strain OS217 / ATCC BAA-1090 / DSM 15013).